The following is a 142-amino-acid chain: Large-conductance mechanosensitive channel (142 aa).

Transmembrane regions (helical) follow at residues 14–34 (VMDLAVGVIIGAAFSKIVDSV) and 82–102 (GNFITVFINFLILAWIIFLLI).

The protein belongs to the MscL family. In terms of assembly, homopentamer.

It localises to the cell inner membrane. Functionally, channel that opens in response to stretch forces in the membrane lipid bilayer. May participate in the regulation of osmotic pressure changes within the cell. This Sinorhizobium medicae (strain WSM419) (Ensifer medicae) protein is Large-conductance mechanosensitive channel.